A 171-amino-acid polypeptide reads, in one-letter code: Zinc finger A20 and AN1 domain-containing stress-associated protein 8 (171 aa).

The segment at 11–45 adopts an A20-type zinc-finger fold; the sequence is PEGPILCINNCGFFGSAATMNMCSKCHKEMIMKQE. C17, C21, C33, C36, C112, C115, C126, C128, C133, H136, H142, and C144 together coordinate Zn(2+). An AN1-type zinc finger spans residues 106-152; it reads REGPNRCSTCRKRVGLTGFNCRCGNLYCAMHRYSDKHDCQFDYRTAA.

May be involved in environmental stress response. The protein is Zinc finger A20 and AN1 domain-containing stress-associated protein 8 (SAP8) of Oryza sativa subsp. indica (Rice).